The primary structure comprises 833 residues: Translation initiation factor IF-2 (833 aa).

Positions 331-501 constitute a tr-type G domain; sequence TRAPVVTVMG…LLIAEMQDLK (171 aa). The tract at residues 340-347 is G1; it reads GHVDHGKT. 340 to 347 is a GTP binding site; that stretch reads GHVDHGKT. The tract at residues 365 to 369 is G2; that stretch reads GITQH. The G3 stretch occupies residues 387–390; the sequence is DTPG. Residues 387-391 and 441-444 each bind GTP; these read DTPGH and NKID. The tract at residues 441 to 444 is G4; it reads NKID. The interval 477-479 is G5; it reads SAL.

Belongs to the TRAFAC class translation factor GTPase superfamily. Classic translation factor GTPase family. IF-2 subfamily.

The protein localises to the cytoplasm. In terms of biological role, one of the essential components for the initiation of protein synthesis. Protects formylmethionyl-tRNA from spontaneous hydrolysis and promotes its binding to the 30S ribosomal subunits. Also involved in the hydrolysis of GTP during the formation of the 70S ribosomal complex. This Rickettsia canadensis (strain McKiel) protein is Translation initiation factor IF-2.